A 267-amino-acid polypeptide reads, in one-letter code: Cell division control protein 11 (267 aa).

The Septin-type G domain maps to 6-263; it reads QNRRFTIMAA…ENYRAAVLEG (258 aa). The G1 motif stretch occupies residues 16-23; sequence GPRGSGKS. GTP contacts are provided by residues 16-23, G66, 146-154, and R212; these read GPRGSGKS and KSDGLSITE. The segment at 63–66 is G3 motif; the sequence is DTPG. The G4 motif stretch occupies residues 145–148; sequence SKSD.

The protein belongs to the TRAFAC class TrmE-Era-EngA-EngB-Septin-like GTPase superfamily. Septin GTPase family. Component of the septin complex.

Septins are GTPases involved in cytokinesis. The septins localize to the site of cleavage and act as a structural scaffold that recruits different components involved in diverse processes at specific stages during the cell cycle. Septins are also involved in cell morphogenesis, chitin deposition, cell cycle regulation, cell compartmentalization and spore wall formation. The chain is Cell division control protein 11 (CDC11) from Encephalitozoon cuniculi (strain GB-M1) (Microsporidian parasite).